A 185-amino-acid polypeptide reads, in one-letter code: Ribosome-recycling factor (185 aa).

It belongs to the RRF family.

The protein resides in the cytoplasm. Responsible for the release of ribosomes from messenger RNA at the termination of protein biosynthesis. May increase the efficiency of translation by recycling ribosomes from one round of translation to another. The protein is Ribosome-recycling factor of Thioalkalivibrio sulfidiphilus (strain HL-EbGR7).